A 122-amino-acid polypeptide reads, in one-letter code: Large ribosomal subunit protein uL14 (122 aa).

The protein belongs to the universal ribosomal protein uL14 family. Part of the 50S ribosomal subunit. Forms a cluster with proteins L3 and L19. In the 70S ribosome, L14 and L19 interact and together make contacts with the 16S rRNA in bridges B5 and B8.

Binds to 23S rRNA. Forms part of two intersubunit bridges in the 70S ribosome. The sequence is that of Large ribosomal subunit protein uL14 from Rhizobium johnstonii (strain DSM 114642 / LMG 32736 / 3841) (Rhizobium leguminosarum bv. viciae).